A 484-amino-acid chain; its full sequence is Protein LAZ1 homolog 1 (484 aa).

The N-terminal stretch at 1-19 (MEWRGILCSLLFIVSVGES) is a signal peptide. The next 6 membrane-spanning stretches (helical) occupy residues 42 to 62 (PILSASVFVVIAILLPMYLIF), 76 to 96 (FLIGLILMVPVYAVESFLSLV), 190 to 210 (MILKMICALLAMILEAFGVYG), 219 to 239 (GYPYLAVVLNFSQTWALYCLV), 264 to 284 (IVFLTWWQGIIVAFLFSMGLV), and 299 to 319 (YIICIEMGIAAVVHLYVFPAA). Positions 344 to 364 (PDPEEVKDSERTTRTRYGRHD) are disordered. Residues 347–364 (EEVKDSERTTRTRYGRHD) show a composition bias toward basic and acidic residues. Positions 406–428 (IAKINRTFHQISENVKRFEQQKK) form a coiled coil. The disordered stretch occupies residues 459-484 (VSDSGLGSTNRHHQSRVSGLWTRMRR).

Belongs to the TMEM184 family.

The protein resides in the membrane. This Arabidopsis thaliana (Mouse-ear cress) protein is Protein LAZ1 homolog 1.